Reading from the N-terminus, the 340-residue chain is tRNA N6-adenosine threonylcarbamoyltransferase (340 aa).

Fe cation is bound by residues His113 and His117. Substrate is bound by residues 135–139 (LVSGG), Asp169, Gly182, Asp186, and Asn274. A Fe cation-binding site is contributed by Asp302.

The protein belongs to the KAE1 / TsaD family. Fe(2+) is required as a cofactor.

Its subcellular location is the cytoplasm. The enzyme catalyses L-threonylcarbamoyladenylate + adenosine(37) in tRNA = N(6)-L-threonylcarbamoyladenosine(37) in tRNA + AMP + H(+). Functionally, required for the formation of a threonylcarbamoyl group on adenosine at position 37 (t(6)A37) in tRNAs that read codons beginning with adenine. Is involved in the transfer of the threonylcarbamoyl moiety of threonylcarbamoyl-AMP (TC-AMP) to the N6 group of A37, together with TsaE and TsaB. TsaD likely plays a direct catalytic role in this reaction. The protein is tRNA N6-adenosine threonylcarbamoyltransferase of Mycolicibacterium gilvum (strain PYR-GCK) (Mycobacterium gilvum (strain PYR-GCK)).